We begin with the raw amino-acid sequence, 159 residues long: 3-hydroxyacyl-[acyl-carrier-protein] dehydratase FabZ (159 aa).

His65 is an active-site residue.

This sequence belongs to the thioester dehydratase family. FabZ subfamily.

It is found in the cytoplasm. The catalysed reaction is a (3R)-hydroxyacyl-[ACP] = a (2E)-enoyl-[ACP] + H2O. Involved in unsaturated fatty acids biosynthesis. Catalyzes the dehydration of short chain beta-hydroxyacyl-ACPs and long chain saturated and unsaturated beta-hydroxyacyl-ACPs. The polypeptide is 3-hydroxyacyl-[acyl-carrier-protein] dehydratase FabZ (Microcystis aeruginosa (strain NIES-843 / IAM M-2473)).